The primary structure comprises 217 residues: Thiamine-phosphate synthase (217 aa).

Residues 38 to 42 (QYRDK) and N70 contribute to the 4-amino-2-methyl-5-(diphosphooxymethyl)pyrimidine site. Residues D71 and D90 each coordinate Mg(2+). S109 lines the 4-amino-2-methyl-5-(diphosphooxymethyl)pyrimidine pocket. 136–138 (SIT) provides a ligand contact to 2-[(2R,5Z)-2-carboxy-4-methylthiazol-5(2H)-ylidene]ethyl phosphate. Residue K139 participates in 4-amino-2-methyl-5-(diphosphooxymethyl)pyrimidine binding. G166 contributes to the 2-[(2R,5Z)-2-carboxy-4-methylthiazol-5(2H)-ylidene]ethyl phosphate binding site.

The protein belongs to the thiamine-phosphate synthase family. The cofactor is Mg(2+).

The catalysed reaction is 2-[(2R,5Z)-2-carboxy-4-methylthiazol-5(2H)-ylidene]ethyl phosphate + 4-amino-2-methyl-5-(diphosphooxymethyl)pyrimidine + 2 H(+) = thiamine phosphate + CO2 + diphosphate. It carries out the reaction 2-(2-carboxy-4-methylthiazol-5-yl)ethyl phosphate + 4-amino-2-methyl-5-(diphosphooxymethyl)pyrimidine + 2 H(+) = thiamine phosphate + CO2 + diphosphate. It catalyses the reaction 4-methyl-5-(2-phosphooxyethyl)-thiazole + 4-amino-2-methyl-5-(diphosphooxymethyl)pyrimidine + H(+) = thiamine phosphate + diphosphate. It participates in cofactor biosynthesis; thiamine diphosphate biosynthesis; thiamine phosphate from 4-amino-2-methyl-5-diphosphomethylpyrimidine and 4-methyl-5-(2-phosphoethyl)-thiazole: step 1/1. In terms of biological role, condenses 4-methyl-5-(beta-hydroxyethyl)thiazole monophosphate (THZ-P) and 2-methyl-4-amino-5-hydroxymethyl pyrimidine pyrophosphate (HMP-PP) to form thiamine monophosphate (TMP). This chain is Thiamine-phosphate synthase, found in Nitrosococcus oceani (strain ATCC 19707 / BCRC 17464 / JCM 30415 / NCIMB 11848 / C-107).